Consider the following 136-residue polypeptide: Fatty acid-binding protein homolog 5 (136 aa).

A fatty acid is bound by residues R111 and 131–133 (RAY).

Belongs to the calycin superfamily. Fatty-acid binding protein (FABP) family.

This is Fatty acid-binding protein homolog 5 (lbp-5) from Caenorhabditis elegans.